The following is a 671-amino-acid chain: Heat shock transcription factor hsf-1 (671 aa).

Low complexity-rich tracts occupy residues 1-17 (MQPTGNQIQQNQQQQQQ) and 38-52 (QQAPPNRPPRQNHQN). The tract at residues 1-61 (MQPTGNQIQQ…NGAIGGKKSS (61 aa)) is disordered. A DNA-binding domain region spans residues 89–196 (LPVFLIKLWN…LLSQIKRKQS (108 aa)). Positions 206–240 (NEQTQQNLEVVMAEMRAMREKAKNMEDKMNKLTKE) form a coiled coil. Disordered stretches follow at residues 329–423 (QEPF…PLTH), 437–493 (YQGA…VNNY), 526–552 (HHPTTSTSSTNADPHQNLYSPTLGLSP), and 612–671 (NAPE…PNLV). Positions 370–386 (GAQSSRYSDGGATSSRE) are enriched in polar residues. The segment covering 439–456 (GASPASGGPSTSSSAPSG) has biased composition (low complexity). Composition is skewed to polar residues over residues 474 to 493 (ATRQMAQPQQDYSGGFVNNY) and 528 to 552 (PTTSTSSTNADPHQNLYSPTLGLSP).

The protein belongs to the HSF family. As to quaternary structure, forms homodimers and homotrimers. Component of the DHIC (ddl-1-containing hsf-1 inhibitory complex), which contains at least ddl-1, ddl-2, hsb-1 and hsf-1. Within the complex, interacts with ddl-1. Formation of the DHIC may be dependent upon the Insulin/IGF-1-like signaling (IIS) mediated pathway. Phosphorylated. In terms of processing, sumoylated. Sumoylation may inhibit transcriptional activity in response to heat shock. In terms of tissue distribution, expressed in intestinal cells, body wall muscle cells, and hypodermal cells, as well as many neurons in the head and tail.

The protein resides in the nucleus. It localises to the cytoplasm. Its function is as follows. Functions as a stress-inducible and DNA-binding transcription factor, playing a central role in the transcriptional activation of the heat shock response (HSR), leading to the expression of a large class of molecular chaperones, heat shock proteins (HSPs), that protect cells from cellular insult damage. Upon exposure to heat and other stress stimuli, activates gene transcription through binding to site-specific heat shock elements (HSEs) present in the promoter regions of target genes, such as the HSPs. Binds to inverted 5'-NGAAN-3' pentamer DNA sequences in HSEs. Involved in positive modulation of expression of heat shock protein hsp-16.2 in response to heat shock; may act in concert with homeodomain-interacting protein kinase hpk-1. In response to heat shock or starvation, required for the modulation of lifespan, and protection against aberrant protein aggregation proteotoxicity; may act in parallel with the Insulin/IGF-1-like signaling (IIS) mediated pathway. Plays a role in modulating autophagy, in response to a moderate and short-term heat shock, also known as a hormetic heat shock. Involved in positive modulation of ascaroside pheromone biosynthesis in response to heat shock, perhaps by directly activating transcription of peroxisomal fatty acid beta-oxidation genes. Required in modulating the response to infection by either Gram-negative or Gram-positive bacteria, perhaps acting via regulation of expression of Hsp90/daf-21 and members of the small heat shock protein (HSP20) family. May play a role downstream of the daf-16/FOXO and daf-2 signaling pathway in response to bacterial pathogens. Modulates expression of multiple microRNA genes, in both heat shock-dependent and -independent manner. Independent of heat shock, required to modulate expression of genes involved in larval development, mainly distinct from HSPs; acts in concert with putative transcription factor efl-1/E2F, which may form part of a multiprotein DRM complex. Independent of heat shock, involved in promoting death of the linker cell, a male-specific cell which guides the elongation of the gonad; perhaps acting by modulating expression of ubiquitin-conjugating enzyme let-70. Plays a role in egg-laying. The polypeptide is Heat shock transcription factor hsf-1 (Caenorhabditis elegans).